The primary structure comprises 380 residues: Tryptophan 2,3-dioxygenase (380 aa).

Residues 57 to 61 and R128 contribute to the substrate site; that span reads FIITH. H313 provides a ligand contact to heme. T328 serves as a coordination point for substrate.

This sequence belongs to the tryptophan 2,3-dioxygenase family. In terms of assembly, homotetramer. Dimer of dimers. Heme serves as cofactor.

The enzyme catalyses L-tryptophan + O2 = N-formyl-L-kynurenine. Its pathway is amino-acid degradation; L-tryptophan degradation via kynurenine pathway; L-kynurenine from L-tryptophan: step 1/2. The protein operates within pigment biosynthesis; ommochrome biosynthesis. Heme-dependent dioxygenase that catalyzes the oxidative cleavage of the L-tryptophan (L-Trp) pyrrole ring and converts L-tryptophan to N-formyl-L-kynurenine. Catalyzes the oxidative cleavage of the indole moiety. This is Tryptophan 2,3-dioxygenase from Drosophila willistoni (Fruit fly).